Here is a 307-residue protein sequence, read N- to C-terminus: Potassium channel subfamily K member 7 (307 aa).

Over 1 to 10 (MGGLRPWSRY) the chain is Cytoplasmic. The chain crosses the membrane as a helical span at residues 11–31 (GLLVVAHLLALGLGAVVFQAL). Asn-83 is a glycosylation site (N-linked (GlcNAc...) asparagine). The pore-forming intramembrane region spans 92-119 (LPSALLFAASILTTTGYGHMAPLSPGGK). Residues 120–140 (AFCMVYAALGLPASLALVATL) traverse the membrane as a helical segment. Residues 141–170 (RHCLLPVLSRPRAWVAVHWQLSPARAALLQ) lie on the Cytoplasmic side of the membrane. The chain crosses the membrane as a helical span at residues 171-191 (AVALGLLVASSFVLLPALVLW). An intramembrane region (pore-forming) is located at residues 199 to 227 (LLGAVYFCFSSLSTIGLEDLLPGRGRSLH). The chain crosses the membrane as a helical span at residues 233–253 (LGQLALLGYLLLGLLAMLLAV). At 254-307 (ETFSELPQVRAMGKFFRPSGPVTAEDQGGILGQDELALSTLPPAAPASGQAPAC) the chain is on the cytoplasmic side.

The protein belongs to the two pore domain potassium channel (TC 1.A.1.8) family. In terms of assembly, homodimer.

The protein resides in the membrane. Probable potassium channel subunit. No channel activity observed in vitro as protein remains in the endoplasmic reticulum. May need to associate with an as yet unknown partner in order to reach the plasma membrane. This is Potassium channel subfamily K member 7 (KCNK7) from Homo sapiens (Human).